Here is a 125-residue protein sequence, read N- to C-terminus: Small ribosomal subunit protein uS12 (125 aa).

Residue Asp-89 is modified to 3-methylthioaspartic acid. A disordered region spans residues 104–125 (LQGVKDRKQSRSKYGSKRPKKA). The span at 113–125 (SRSKYGSKRPKKA) shows a compositional bias: basic residues.

The protein belongs to the universal ribosomal protein uS12 family. In terms of assembly, part of the 30S ribosomal subunit. Contacts proteins S8 and S17. May interact with IF1 in the 30S initiation complex.

Its function is as follows. With S4 and S5 plays an important role in translational accuracy. In terms of biological role, interacts with and stabilizes bases of the 16S rRNA that are involved in tRNA selection in the A site and with the mRNA backbone. Located at the interface of the 30S and 50S subunits, it traverses the body of the 30S subunit contacting proteins on the other side and probably holding the rRNA structure together. The combined cluster of proteins S8, S12 and S17 appears to hold together the shoulder and platform of the 30S subunit. The sequence is that of Small ribosomal subunit protein uS12 from Leptothrix cholodnii (strain ATCC 51168 / LMG 8142 / SP-6) (Leptothrix discophora (strain SP-6)).